Reading from the N-terminus, the 497-residue chain is Aspartyl/glutamyl-tRNA(Asn/Gln) amidotransferase subunit B (497 aa).

Belongs to the GatB/GatE family. GatB subfamily. In terms of assembly, heterotrimer of A, B and C subunits.

It catalyses the reaction L-glutamyl-tRNA(Gln) + L-glutamine + ATP + H2O = L-glutaminyl-tRNA(Gln) + L-glutamate + ADP + phosphate + H(+). The catalysed reaction is L-aspartyl-tRNA(Asn) + L-glutamine + ATP + H2O = L-asparaginyl-tRNA(Asn) + L-glutamate + ADP + phosphate + 2 H(+). Its function is as follows. Allows the formation of correctly charged Asn-tRNA(Asn) or Gln-tRNA(Gln) through the transamidation of misacylated Asp-tRNA(Asn) or Glu-tRNA(Gln) in organisms which lack either or both of asparaginyl-tRNA or glutaminyl-tRNA synthetases. The reaction takes place in the presence of glutamine and ATP through an activated phospho-Asp-tRNA(Asn) or phospho-Glu-tRNA(Gln). The chain is Aspartyl/glutamyl-tRNA(Asn/Gln) amidotransferase subunit B from Novosphingobium aromaticivorans (strain ATCC 700278 / DSM 12444 / CCUG 56034 / CIP 105152 / NBRC 16084 / F199).